Consider the following 265-residue polypeptide: Tryptophan synthase alpha chain (265 aa).

Catalysis depends on proton acceptor residues Glu-48 and Asp-59.

This sequence belongs to the TrpA family. In terms of assembly, tetramer of two alpha and two beta chains.

It carries out the reaction (1S,2R)-1-C-(indol-3-yl)glycerol 3-phosphate + L-serine = D-glyceraldehyde 3-phosphate + L-tryptophan + H2O. It functions in the pathway amino-acid biosynthesis; L-tryptophan biosynthesis; L-tryptophan from chorismate: step 5/5. In terms of biological role, the alpha subunit is responsible for the aldol cleavage of indoleglycerol phosphate to indole and glyceraldehyde 3-phosphate. In Pelagibacter ubique (strain HTCC1062), this protein is Tryptophan synthase alpha chain.